A 237-amino-acid polypeptide reads, in one-letter code: Sulfolipid-1 exporter Sap (237 aa).

Helical transmembrane passes span 5–25 (VLVLALSVICEPVRIGLVVLM), 38–58 (FLCGGYTMAGGVAMVTLVVLG), 66–86 (FSVAEVQIGTGLIALLIAFAL), 141–161 (VSGLGAALPSANYMGAMAAIL), 171–191 (ALAVVTFNVVAFTVAEVPLVS), and 217–237 (DAALLVAAGGCLMLTLGLSNL).

Belongs to the peptidoglycolipid addressing protein (GAP) (TC 2.A.116) family.

Its subcellular location is the cell inner membrane. Functionally, required for the transport across the inner membrane of sulfolipid-1 (SL-1), which is a major cell wall lipid of pathogenic mycobacteria. Could also transport SL1278 (2-palmitoyl-3-(C43)-phthioceranyl-alpha, alpha'-D-trehalose-2'-sulfate), which is the precursor of SL-1. May potentiate SL-1 levels and confer specificity for sulfolipids over structurally similar glycolipids. This Mycobacterium tuberculosis (strain ATCC 25618 / H37Rv) protein is Sulfolipid-1 exporter Sap.